Consider the following 295-residue polypeptide: MKSRIEQALASAPEALSKQLAPIVLADDFDATLSAQQFEQLLSATSLSDKELRVALLPFAAAYSYAPISEFYVGAIVRGLSGRLYFGANMEFFGVQLGQTVHAEQSAISHAWMKGEHGVKDITINFSPCGHCRQFMNELSTAKELKVQLPERDEKSLHEYLPEAFGPADLGIESGLMAEVKHQFVCDDKDALIQQAVEAMNMSHAPYTNNLSGLALELANGRVFKGAYAENAAFNPSLPPLQVALIQVLLAGETFDSIKAAALVENSEGKISHLADTQSTLEALNPDIPVSFVNV.

2 CMP/dCMP-type deaminase domains span residues 48 to 168 and 187 to 295; these read SDKE…FGPA and DDKD…FVNV. 89–91 serves as a coordination point for substrate; sequence NME. H102 provides a ligand contact to Zn(2+). E104 acts as the Proton donor in catalysis. C129 and C132 together coordinate Zn(2+).

This sequence belongs to the cytidine and deoxycytidylate deaminase family. As to quaternary structure, homodimer. It depends on Zn(2+) as a cofactor.

It catalyses the reaction cytidine + H2O + H(+) = uridine + NH4(+). The enzyme catalyses 2'-deoxycytidine + H2O + H(+) = 2'-deoxyuridine + NH4(+). This enzyme scavenges exogenous and endogenous cytidine and 2'-deoxycytidine for UMP synthesis. In Vibrio parahaemolyticus serotype O3:K6 (strain RIMD 2210633), this protein is Cytidine deaminase.